Here is a 345-residue protein sequence, read N- to C-terminus: Dihydroorotase (345 aa).

Zn(2+) contacts are provided by histidine 13 and histidine 15. Residues 15-17 and asparagine 41 contribute to the substrate site; that span reads HLR. Positions 99, 136, and 174 each coordinate Zn(2+). Lysine 99 bears the N6-carboxylysine mark. Histidine 136 is a substrate binding site. Residue leucine 219 participates in substrate binding. Aspartate 247 provides a ligand contact to Zn(2+). Aspartate 247 is a catalytic residue. Substrate-binding residues include histidine 251 and alanine 263.

This sequence belongs to the metallo-dependent hydrolases superfamily. DHOase family. Class II DHOase subfamily. As to quaternary structure, homodimer. It depends on Zn(2+) as a cofactor.

The enzyme catalyses (S)-dihydroorotate + H2O = N-carbamoyl-L-aspartate + H(+). It participates in pyrimidine metabolism; UMP biosynthesis via de novo pathway; (S)-dihydroorotate from bicarbonate: step 3/3. In terms of biological role, catalyzes the reversible cyclization of carbamoyl aspartate to dihydroorotate. This chain is Dihydroorotase, found in Hahella chejuensis (strain KCTC 2396).